Reading from the N-terminus, the 315-residue chain is DNA-directed RNA polymerase subunit alpha (315 aa).

Residues 1 to 228 (MLEIEKPKIE…EHFKLFMTLT (228 aa)) are alpha N-terminal domain (alpha-NTD). The interval 245-315 (KEKVLEMTIE…LGLGLRKSED (71 aa)) is alpha C-terminal domain (alpha-CTD).

Belongs to the RNA polymerase alpha chain family. In terms of assembly, homodimer. The RNAP catalytic core consists of 2 alpha, 1 beta, 1 beta' and 1 omega subunit. When a sigma factor is associated with the core the holoenzyme is formed, which can initiate transcription.

The enzyme catalyses RNA(n) + a ribonucleoside 5'-triphosphate = RNA(n+1) + diphosphate. DNA-dependent RNA polymerase catalyzes the transcription of DNA into RNA using the four ribonucleoside triphosphates as substrates. The protein is DNA-directed RNA polymerase subunit alpha of Clostridium botulinum (strain Langeland / NCTC 10281 / Type F).